We begin with the raw amino-acid sequence, 782 residues long: Endonuclease MutS2 (782 aa).

Position 336–343 (336–343) interacts with ATP; the sequence is GPNTGGKT. A Smr domain is found at 707-782; that stretch reads LDLRGYRYED…GFGVTVATLK (76 aa).

Belongs to the DNA mismatch repair MutS family. MutS2 subfamily. As to quaternary structure, homodimer. Binds to stalled ribosomes, contacting rRNA.

Endonuclease that is involved in the suppression of homologous recombination and thus may have a key role in the control of bacterial genetic diversity. Functionally, acts as a ribosome collision sensor, splitting the ribosome into its 2 subunits. Detects stalled/collided 70S ribosomes which it binds and splits by an ATP-hydrolysis driven conformational change. Acts upstream of the ribosome quality control system (RQC), a ribosome-associated complex that mediates the extraction of incompletely synthesized nascent chains from stalled ribosomes and their subsequent degradation. Probably generates substrates for RQC. The chain is Endonuclease MutS2 from Staphylococcus aureus (strain bovine RF122 / ET3-1).